The chain runs to 171 residues: Peptide methionine sulfoxide reductase MsrA (171 aa).

Cys13 is an active-site residue.

This sequence belongs to the MsrA Met sulfoxide reductase family.

The enzyme catalyses L-methionyl-[protein] + [thioredoxin]-disulfide + H2O = L-methionyl-(S)-S-oxide-[protein] + [thioredoxin]-dithiol. It carries out the reaction [thioredoxin]-disulfide + L-methionine + H2O = L-methionine (S)-S-oxide + [thioredoxin]-dithiol. Its function is as follows. Has an important function as a repair enzyme for proteins that have been inactivated by oxidation. Catalyzes the reversible oxidation-reduction of methionine sulfoxide in proteins to methionine. The polypeptide is Peptide methionine sulfoxide reductase MsrA (Mycobacterium sp. (strain MCS)).